Here is a 307-residue protein sequence, read N- to C-terminus: Aspartate carbamoyltransferase catalytic subunit (307 aa).

Carbamoyl phosphate contacts are provided by R54 and T55. Residue K83 participates in L-aspartate binding. Carbamoyl phosphate-binding residues include R104, H132, and Q135. 2 residues coordinate L-aspartate: R165 and R228. Residues L267 and P268 each coordinate carbamoyl phosphate.

This sequence belongs to the aspartate/ornithine carbamoyltransferase superfamily. ATCase family. In terms of assembly, heterododecamer (2C3:3R2) of six catalytic PyrB chains organized as two trimers (C3), and six regulatory PyrI chains organized as three dimers (R2).

It catalyses the reaction carbamoyl phosphate + L-aspartate = N-carbamoyl-L-aspartate + phosphate + H(+). It functions in the pathway pyrimidine metabolism; UMP biosynthesis via de novo pathway; (S)-dihydroorotate from bicarbonate: step 2/3. Functionally, catalyzes the condensation of carbamoyl phosphate and aspartate to form carbamoyl aspartate and inorganic phosphate, the committed step in the de novo pyrimidine nucleotide biosynthesis pathway. This is Aspartate carbamoyltransferase catalytic subunit from Clostridium botulinum (strain Langeland / NCTC 10281 / Type F).